Here is a 432-residue protein sequence, read N- to C-terminus: MSAYSPLSAQLDADTDVDVESTRTEGRRKMEWTLQHMPILQELRARFAETKPLAGETIGMAMHVEAKTANLVELLALGGAEVAITGCNPLSTHDDVSAALDSNENVTSYAKRGVDEEAYYDAIEAVVAHEPTITIDDGMDMVYAIHEDHPDLLDTIIGGAEETTTGVHRLRAMDEDDELQYPVFAVNDTPMKRLFDNVHGTGESALATIAMTTNLSYAGKNVVVAGYGYCGKGVAQKAAGQNANVIVTEVEPRRALEAHMEGYEVMPMNEAATRGDVFVTTTGNRDVITQEDFEVMSDGAILANAGHFDVEINLEELSELAIDTYEARDGVQAYELADGRRLNVLAEGRLVNLAAPIALGHPAEVMDQSFGIQAVCVRELIENKSSYDAGVHNVPDELDREVAEIKLEAEGVDIDSLTQTQSEYLDSWSHGT.

Residues 1 to 24 (MSAYSPLSAQLDADTDVDVESTRT) are disordered. Substrate is bound by residues D137 and E162. Residue 163-165 (TTT) coordinates NAD(+). Substrate-binding residues include K192 and D196. NAD(+) is bound by residues N197, 226–231 (GYGYCG), E249, N284, 305–307 (AGH), and N352.

The protein belongs to the adenosylhomocysteinase family. It depends on NAD(+) as a cofactor.

Its subcellular location is the cytoplasm. The catalysed reaction is S-adenosyl-L-homocysteine + H2O = L-homocysteine + adenosine. It participates in amino-acid biosynthesis; L-homocysteine biosynthesis; L-homocysteine from S-adenosyl-L-homocysteine: step 1/1. Its function is as follows. May play a key role in the regulation of the intracellular concentration of adenosylhomocysteine. This Haloquadratum walsbyi (strain DSM 16854 / JCM 12705 / C23) protein is Adenosylhomocysteinase.